Reading from the N-terminus, the 71-residue chain is Protein PSY3 (71 aa).

The signal sequence occupies residues 1 to 25 (MGYSSSSRIGLCLFLFFTFALLSSA). A propeptide spanning residues 26–49 (RISLSFSENEMTVVPERSLMVSTN) is cleaved from the precursor. A disordered region spans residues 47-71 (STNDYSDPTANGRHDPPRGGRGRRR). Tyr-51 bears the Sulfotyrosine mark. Pro-63 carries the 4-hydroxyproline modification. A glycan (O-linked (Ara...) hydroxyproline) is linked at Pro-63. A propeptide spanning residues 66-71 (GRGRRR) is cleaved from the precursor.

It belongs to the sulfated-peptide plant hormone family. In terms of processing, the sulfation and the glycosylation are required for full activity.

It is found in the secreted. Functionally, promotes cellular proliferation and expansion. This is Protein PSY3 (PSY3) from Arabidopsis thaliana (Mouse-ear cress).